Consider the following 124-residue polypeptide: S-adenosylmethionine decarboxylase proenzyme (124 aa).

Serine 63 serves as the catalytic Schiff-base intermediate with substrate; via pyruvic acid. Serine 63 is modified (pyruvic acid (Ser); by autocatalysis). Catalysis depends on histidine 68, which acts as the Proton acceptor; for processing activity. The active-site Proton donor; for catalytic activity is cysteine 83.

It belongs to the prokaryotic AdoMetDC family. Type 1 subfamily. In terms of assembly, heterotetramer of two alpha and two beta chains arranged as a dimer of alpha/beta heterodimers. The cofactor is pyruvate. In terms of processing, is synthesized initially as an inactive proenzyme. Formation of the active enzyme involves a self-maturation process in which the active site pyruvoyl group is generated from an internal serine residue via an autocatalytic post-translational modification. Two non-identical subunits are generated from the proenzyme in this reaction, and the pyruvate is formed at the N-terminus of the alpha chain, which is derived from the carboxyl end of the proenzyme. The post-translation cleavage follows an unusual pathway, termed non-hydrolytic serinolysis, in which the side chain hydroxyl group of the serine supplies its oxygen atom to form the C-terminus of the beta chain, while the remainder of the serine residue undergoes an oxidative deamination to produce ammonia and the pyruvoyl group blocking the N-terminus of the alpha chain.

The enzyme catalyses S-adenosyl-L-methionine + H(+) = S-adenosyl 3-(methylsulfanyl)propylamine + CO2. Its pathway is amine and polyamine biosynthesis; S-adenosylmethioninamine biosynthesis; S-adenosylmethioninamine from S-adenosyl-L-methionine: step 1/1. Its function is as follows. Catalyzes the decarboxylation of S-adenosylmethionine to S-adenosylmethioninamine (dcAdoMet), the propylamine donor required for the synthesis of the polyamines spermine and spermidine from the diamine putrescine. The protein is S-adenosylmethionine decarboxylase proenzyme of Thermoanaerobacter pseudethanolicus (strain ATCC 33223 / 39E) (Clostridium thermohydrosulfuricum).